Reading from the N-terminus, the 141-residue chain is ATP synthase epsilon chain (141 aa).

It belongs to the ATPase epsilon chain family. As to quaternary structure, F-type ATPases have 2 components, CF(1) - the catalytic core - and CF(0) - the membrane proton channel. CF(1) has five subunits: alpha(3), beta(3), gamma(1), delta(1), epsilon(1). CF(0) has three main subunits: a, b and c.

It is found in the cell inner membrane. In terms of biological role, produces ATP from ADP in the presence of a proton gradient across the membrane. The chain is ATP synthase epsilon chain from Thioalkalivibrio sulfidiphilus (strain HL-EbGR7).